The following is a 164-amino-acid chain: Transcription factor E (164 aa).

The HTH TFE/IIEalpha-type domain occupies 5-87 (NDKVIRGYLR…LWHLDFSDIE (83 aa)).

Belongs to the TFE family. As to quaternary structure, monomer. Interaction with RNA polymerase subunits RpoF and RpoE is necessary for Tfe stimulatory transcription activity. Able to interact with Tbp and RNA polymerase in the absence of DNA promoter. Interacts both with the preinitiation and elongation complexes.

In terms of biological role, transcription factor that plays a role in the activation of archaeal genes transcribed by RNA polymerase. Facilitates transcription initiation by enhancing TATA-box recognition by TATA-box-binding protein (Tbp), and transcription factor B (Tfb) and RNA polymerase recruitment. Not absolutely required for transcription in vitro, but particularly important in cases where Tbp or Tfb function is not optimal. It dynamically alters the nucleic acid-binding properties of RNA polymerases by stabilizing the initiation complex and destabilizing elongation complexes. Seems to translocate with the RNA polymerase following initiation and acts by binding to the non template strand of the transcription bubble in elongation complexes. This is Transcription factor E from Methanosarcina mazei (strain ATCC BAA-159 / DSM 3647 / Goe1 / Go1 / JCM 11833 / OCM 88) (Methanosarcina frisia).